We begin with the raw amino-acid sequence, 448 residues long: tRNA-2-methylthio-N(6)-dimethylallyladenosine synthase (448 aa).

In terms of domain architecture, MTTase N-terminal spans 7–123; the sequence is RSFYIHTFGC…LPALIGDAEE (117 aa). 6 residues coordinate [4Fe-4S] cluster: Cys16, Cys52, Cys86, Cys159, Cys163, and Cys166. Positions 145 to 375 constitute a Radical SAM core domain; that stretch reads REVGVGAFVP…IDLQLSISAE (231 aa). The TRAM domain occupies 378-441; sequence QEAVGSVVDV…SATLTGVNQG (64 aa).

It belongs to the methylthiotransferase family. MiaB subfamily. As to quaternary structure, monomer. Requires [4Fe-4S] cluster as cofactor.

It is found in the cytoplasm. The enzyme catalyses N(6)-dimethylallyladenosine(37) in tRNA + (sulfur carrier)-SH + AH2 + 2 S-adenosyl-L-methionine = 2-methylsulfanyl-N(6)-dimethylallyladenosine(37) in tRNA + (sulfur carrier)-H + 5'-deoxyadenosine + L-methionine + A + S-adenosyl-L-homocysteine + 2 H(+). Its function is as follows. Catalyzes the methylthiolation of N6-(dimethylallyl)adenosine (i(6)A), leading to the formation of 2-methylthio-N6-(dimethylallyl)adenosine (ms(2)i(6)A) at position 37 in tRNAs that read codons beginning with uridine. The sequence is that of tRNA-2-methylthio-N(6)-dimethylallyladenosine synthase from Chlorobium phaeovibrioides (strain DSM 265 / 1930) (Prosthecochloris vibrioformis (strain DSM 265)).